The primary structure comprises 317 residues: Cyclin-dependent kinase 1 (317 aa).

The Protein kinase domain occupies 7-292 (YQRQEKVGEG…AKRALIHPYF (286 aa)). Residues 13-21 (VGEGTYGVV) and Lys-37 each bind ATP. Thr-17 bears the Phosphothreonine mark. The residue at position 18 (Tyr-18) is a Phosphotyrosine; by SWE1. The active-site Proton acceptor is the Asp-133. Residue Thr-166 is modified to Phosphothreonine; by CAK. Residues 296–317 (DDRDHNNYNEDNIGIDKHQNMQ) are disordered.

The protein belongs to the protein kinase superfamily. CMGC Ser/Thr protein kinase family. CDC2/CDKX subfamily. In terms of assembly, forms several complexes with cyclins CCN1, CLB2, CLN3, and HGC1. The CDC28-CCN1 complex associates with septin CDC11 upon hyphal induction. Interacts with IQG1, RFA2, and HSP90. Post-translationally, phosphorylated at Tyr-18 by SWE1 in a cell cycle-dependent manner. Yeast-form and hyphal cells display similar dynamics of phosphorylation and dephosphorylation of Tyr-18. Tyr-18 phosphorylation leads to inhibition of CDC28 kinase activity.

The enzyme catalyses L-seryl-[protein] + ATP = O-phospho-L-seryl-[protein] + ADP + H(+). It catalyses the reaction L-threonyl-[protein] + ATP = O-phospho-L-threonyl-[protein] + ADP + H(+). With respect to regulation, phosphorylation at Thr-17 or Tyr-18 inactivates the enzyme, while phosphorylation at Thr-166 activates it. Functionally, cyclin-dependent kinase that acts as a master regulator of the mitotic and meiotic cell cycles. May drive the G1-S transition. Plays a role in mitotic exit. Plays a role in the expression of morphology-related transcription factors, and especially hyphae-specific genes. Binds distinct cyclin subunits as cells progress through the division cycle or flamentous growth. The CDC28-CLB2 complex regulates cytokinesis partly by phosphorylating the actomyosin ring component IQG1. The CDC28-CLN3 complex phosphorylates SLA1 which regulates cortical actin patch dynamics. The CDC28-CCN1 complex phosphorylates CDC11 and SEC2 upon induction of filamentous growth. The CDC28-HGC1 complex also phosphorylates SEC2 and maintains CDC11 phosphorylation throughout hyphal growth. Moreover, the CDC28-HGC1 complex phosphorylates and prevents RGA2 from localizing to hyphal tips, leading to localized CDC42 activation for hyphal extension. CDC28-HGC1 phosphorylation of EFG1 represses cell separation genes during hyphal growth. Additional substrates for CDC28 are RFA2 in G1-phase; MOB2, which is required for the maintenance of polarisome components and for inhibition of cell separation in hyphae; and GIN4 to regulate its association to SEP7 and subsequent septin ring assembly. This chain is Cyclin-dependent kinase 1, found in Candida albicans (strain SC5314 / ATCC MYA-2876) (Yeast).